Reading from the N-terminus, the 672-residue chain is tRNA 5-methylaminomethyl-2-thiouridine biosynthesis bifunctional protein MnmC (672 aa).

Residues 1 to 243 are tRNA (mnm(5)s(2)U34)-methyltransferase; the sequence is MTSIKNAELG…KREMIAGSME (243 aa). Residues 269–672 form an FAD-dependent cmnm(5)s(2)U34 oxidoreductase region; sequence IGGGIASAAL…LRKGKAITEL (404 aa).

The protein in the N-terminal section; belongs to the methyltransferase superfamily. tRNA (mnm(5)s(2)U34)-methyltransferase family. This sequence in the C-terminal section; belongs to the DAO family. It depends on FAD as a cofactor.

The protein resides in the cytoplasm. The catalysed reaction is 5-aminomethyl-2-thiouridine(34) in tRNA + S-adenosyl-L-methionine = 5-methylaminomethyl-2-thiouridine(34) in tRNA + S-adenosyl-L-homocysteine + H(+). Its function is as follows. Catalyzes the last two steps in the biosynthesis of 5-methylaminomethyl-2-thiouridine (mnm(5)s(2)U) at the wobble position (U34) in tRNA. Catalyzes the FAD-dependent demodification of cmnm(5)s(2)U34 to nm(5)s(2)U34, followed by the transfer of a methyl group from S-adenosyl-L-methionine to nm(5)s(2)U34, to form mnm(5)s(2)U34. This chain is tRNA 5-methylaminomethyl-2-thiouridine biosynthesis bifunctional protein MnmC, found in Vibrio campbellii (strain ATCC BAA-1116).